Reading from the N-terminus, the 478-residue chain is Lysosome membrane protein 2 (478 aa).

Residues 2–4 (ARC) are Cytoplasmic-facing. Residues 5-27 (CFYTAGTLSLLLLVTSVTLLVAR) traverse the membrane as a helical segment. The Lumenal portion of the chain corresponds to 28–433 (VFQKAVDQTI…QLKSVINTTL (406 aa)). Residues N45, N68, N105, and N122 are each glycosylated (N-linked (GlcNAc...) asparagine). Residues 155 to 191 (IIEAMLKAYQQTLFVTHTVHELLWGYKDEVLSLVHIF) form an important for interaction with GBA1 region. N-linked (GlcNAc...) asparagine glycosylation is found at N206, N224, N249, and N304. 2 disulfide bridges follow: C274/C329 and C312/C318. 3 N-linked (GlcNAc...) asparagine glycosylation sites follow: N325, N412, and N430. The chain crosses the membrane as a helical span at residues 434–459 (IVTNIPYIIMALGVFFGLIFTWLACR). At 460-478 (GQGSTDEGTADERAPLIRT) the chain is on the cytoplasmic side.

It belongs to the CD36 family. Interacts with GBA1. Acylated by palmitic acid group(s).

The protein localises to the lysosome membrane. In terms of biological role, acts as a lysosomal receptor for glucosylceramidase (GBA1) targeting. The polypeptide is Lysosome membrane protein 2 (Scarb2) (Rattus norvegicus (Rat)).